Consider the following 417-residue polypeptide: N-acetylmuramoyl-L-alanine amidase AmiC (417 aa).

A signal peptide (tat-type signal) is located at residues 1–31 (MSGSNTAISRRRLLQGAGAMWLLSVSQVSLA). The tract at residues 166-185 (LEKQVPPAQSGPQPGKAGRD) is disordered. Residues 190 to 404 (IMLDPGHGGE…VAESILAGIK (215 aa)) enclose the MurNAc-LAA domain.

Belongs to the N-acetylmuramoyl-L-alanine amidase 3 family. Post-translationally, predicted to be exported by the Tat system. The position of the signal peptide cleavage has not been experimentally proven.

The protein resides in the periplasm. It catalyses the reaction Hydrolyzes the link between N-acetylmuramoyl residues and L-amino acid residues in certain cell-wall glycopeptides.. Functionally, cell-wall hydrolase involved in septum cleavage during cell division. This is N-acetylmuramoyl-L-alanine amidase AmiC (amiC) from Escherichia coli O6:H1 (strain CFT073 / ATCC 700928 / UPEC).